Reading from the N-terminus, the 428-residue chain is 3-phosphoshikimate 1-carboxyvinyltransferase (428 aa).

3-phosphoshikimate-binding residues include K20, S21, and R25. Phosphoenolpyruvate is bound at residue K20. G92 and R120 together coordinate phosphoenolpyruvate. 3-phosphoshikimate contacts are provided by S166, Q168, D314, and K341. Q168 contributes to the phosphoenolpyruvate binding site. The active-site Proton acceptor is D314. The phosphoenolpyruvate site is built by R345 and R387.

It belongs to the EPSP synthase family. Monomer.

It localises to the cytoplasm. It catalyses the reaction 3-phosphoshikimate + phosphoenolpyruvate = 5-O-(1-carboxyvinyl)-3-phosphoshikimate + phosphate. Its pathway is metabolic intermediate biosynthesis; chorismate biosynthesis; chorismate from D-erythrose 4-phosphate and phosphoenolpyruvate: step 6/7. Functionally, catalyzes the transfer of the enolpyruvyl moiety of phosphoenolpyruvate (PEP) to the 5-hydroxyl of shikimate-3-phosphate (S3P) to produce enolpyruvyl shikimate-3-phosphate and inorganic phosphate. This chain is 3-phosphoshikimate 1-carboxyvinyltransferase, found in Listeria monocytogenes serovar 1/2a (strain ATCC BAA-679 / EGD-e).